Reading from the N-terminus, the 407-residue chain is MTGRVCVLVMDSFGIGASLDAARYGDAGANTLVHIYEACKRGECDIDGVRKGPLMLPNLAGKGLYHAAMASSGLPFIDLSALAIPSGYYGYAVEQSLGKDTPSGHWEMAGVPVTFEWGYFPDKSYCFPEELISEFIKQCNLPGVLGEKHASGTIIIDELGEEHIRTGKPIVYTSADSVFQIAAHEEAFGLQRLYDICKIARNLVDKYQIGRVIARPFTGKPGSFKRTGNRKDYATPPPEKTLLDFLKEDGREVIAIGKIADIYAHQGVTQEIKADGNMALFDATLSAMKTAPQGSLVFTNFVDFDSSYGHRRDVAGYAHALEQFDVRLPELEALLQPDDMVFIAADHGCDPTFPGSDHTREHIPVLMFGPQVNSKFIGRRDCFADIGQSIAEHLQLSSPLTHGVSFL.

Positions 11, 305, 310, 346, 347, and 358 each coordinate Mn(2+).

The protein belongs to the phosphopentomutase family. Mn(2+) is required as a cofactor.

The protein resides in the cytoplasm. The catalysed reaction is 2-deoxy-alpha-D-ribose 1-phosphate = 2-deoxy-D-ribose 5-phosphate. The enzyme catalyses alpha-D-ribose 1-phosphate = D-ribose 5-phosphate. It participates in carbohydrate degradation; 2-deoxy-D-ribose 1-phosphate degradation; D-glyceraldehyde 3-phosphate and acetaldehyde from 2-deoxy-alpha-D-ribose 1-phosphate: step 1/2. Isomerase that catalyzes the conversion of deoxy-ribose 1-phosphate (dRib-1-P) and ribose 1-phosphate (Rib-1-P) to deoxy-ribose 5-phosphate (dRib-5-P) and ribose 5-phosphate (Rib-5-P), respectively. In Legionella pneumophila (strain Paris), this protein is Phosphopentomutase.